The sequence spans 427 residues: MSRSETLFANAQKHIPGGVNSPVRAFKSVGGTPLFFKHAAGAYVTDEDDKRYVDYVGSWGPMILGHSHPDVLDAVRSQLEHGLSYGAPTAMETEMADLVCELVPSMEMVRMVSSGTEATMSAIRLARGFTGRDSILKFEGCYHGHSDSLLVKAGSGALTLGVPSSPGVPAAFAKHTLTVPFNNLDAVRDLLAEVGQEVACIIVEPVAGNMNCVPPAPGYLQGLRELCDEHGVVLIFDEVMTGFRVALGGAQAYYGVTPDLSTFGKIIGGGMPVGCFGGKREIMSHIAPLGPVYQAGTLSGNPLAMAAGLTTLRLISRPGFHDELSDYTRRLLEGLQQRADAAGIPFVTTQAGGMFGLYFSEADEIVTFEDVMTSDSERFKRFFHLMLDGGVYLAPSAFEAGFTSIAHGDAELKLTLDAAEKAFAALK.

Lysine 265 carries the N6-(pyridoxal phosphate)lysine modification.

The protein belongs to the class-III pyridoxal-phosphate-dependent aminotransferase family. HemL subfamily. In terms of assembly, homodimer. Pyridoxal 5'-phosphate is required as a cofactor.

It is found in the cytoplasm. The catalysed reaction is (S)-4-amino-5-oxopentanoate = 5-aminolevulinate. It functions in the pathway porphyrin-containing compound metabolism; protoporphyrin-IX biosynthesis; 5-aminolevulinate from L-glutamyl-tRNA(Glu): step 2/2. The sequence is that of Glutamate-1-semialdehyde 2,1-aminomutase from Pseudomonas syringae pv. syringae (strain B728a).